We begin with the raw amino-acid sequence, 254 residues long: Coenzyme F420:L-glutamate ligase (254 aa).

GTP is bound by residues 11–14 (IPLI), 40–41 (ST), and Lys-45. Asp-109 lines the a divalent metal cation pocket. Asn-112 lines the GTP pocket. A divalent metal cation-binding residues include Asp-150, Thr-151, and Glu-208. 206–213 (MGEGAGGI) is a binding site for GTP.

It belongs to the CofE family. As to quaternary structure, homodimer. Mg(2+) serves as cofactor. Mn(2+) is required as a cofactor. The cofactor is K(+).

It carries out the reaction oxidized coenzyme F420-0 + GTP + L-glutamate = oxidized coenzyme F420-1 + GDP + phosphate + H(+). It catalyses the reaction oxidized coenzyme F420-1 + GTP + L-glutamate = oxidized coenzyme F420-2 + GDP + phosphate + H(+). Its pathway is cofactor biosynthesis; coenzyme F420 biosynthesis. Catalyzes the GTP-dependent successive addition of two or more gamma-linked L-glutamates to the L-lactyl phosphodiester of 7,8-didemethyl-8-hydroxy-5-deazariboflavin (F420-0) to form coenzyme F420-0-glutamyl-glutamate (F420-2) or polyglutamated F420 derivatives. This is Coenzyme F420:L-glutamate ligase from Methanosarcina mazei (strain ATCC BAA-159 / DSM 3647 / Goe1 / Go1 / JCM 11833 / OCM 88) (Methanosarcina frisia).